Reading from the N-terminus, the 78-residue chain is Small ribosomal subunit protein bS18 (78 aa).

Belongs to the bacterial ribosomal protein bS18 family. Part of the 30S ribosomal subunit. Forms a tight heterodimer with protein bS6.

Its function is as follows. Binds as a heterodimer with protein bS6 to the central domain of the 16S rRNA, where it helps stabilize the platform of the 30S subunit. The chain is Small ribosomal subunit protein bS18 from Lacticaseibacillus casei (strain BL23) (Lactobacillus casei).